A 255-amino-acid chain; its full sequence is uncharacterized protein (255 aa).

The interval 42-67 (ACSGSPPEPGKGRPDTTPEQEVPVTA) is disordered.

This is an uncharacterized protein from Mycobacterium tuberculosis (strain CDC 1551 / Oshkosh).